The chain runs to 150 residues: Arginine repressor (150 aa).

Belongs to the ArgR family.

It is found in the cytoplasm. It participates in amino-acid biosynthesis; L-arginine biosynthesis [regulation]. Its function is as follows. Regulates arginine biosynthesis genes. This is Arginine repressor from Clostridium botulinum (strain ATCC 19397 / Type A).